The sequence spans 445 residues: Chromosome partition protein MukF (445 aa).

A leucine-zipper region spans residues 213 to 241; sequence LSETSSTLRELQDTLQAASDELQTQILDI.

It belongs to the MukF family. As to quaternary structure, interacts, and probably forms a ternary complex, with MukE and MukB via its C-terminal region. The complex formation is stimulated by calcium or magnesium. It is required for an interaction between MukE and MukB.

It is found in the cytoplasm. It localises to the nucleoid. In terms of biological role, involved in chromosome condensation, segregation and cell cycle progression. May participate in facilitating chromosome segregation by condensation DNA from both sides of a centrally located replisome during cell division. Not required for mini-F plasmid partitioning. Probably acts via its interaction with MukB and MukE. Overexpression results in anucleate cells. It has a calcium binding activity. In Vibrio campbellii (strain ATCC BAA-1116), this protein is Chromosome partition protein MukF.